We begin with the raw amino-acid sequence, 651 residues long: Probable potassium transport system protein Kup 3 (651 aa).

Helical transmembrane passes span 38-58 (FWAL…TSPL), 77-97 (VLVL…VTAK), 129-149 (LFLL…SMIT), 166-186 (PALE…LFGV), 197-217 (FFGP…AMHI), 242-262 (IGLV…ALYA), 276-296 (WLGF…ALVL), 314-334 (LVLP…QAVI), 366-386 (IYLP…VLLF), 396-416 (YGIA…VVIW), 421-441 (WSWP…AMFF), and 448-468 (LLDG…VIWT).

Belongs to the HAK/KUP transporter (TC 2.A.72) family.

It localises to the cell inner membrane. It carries out the reaction K(+)(in) + H(+)(in) = K(+)(out) + H(+)(out). In terms of biological role, transport of potassium into the cell. Likely operates as a K(+):H(+) symporter. This chain is Probable potassium transport system protein Kup 3, found in Rhodopseudomonas palustris (strain ATCC BAA-98 / CGA009).